A 103-amino-acid polypeptide reads, in one-letter code: UPF0145 protein Dred_2155 (103 aa).

It belongs to the UPF0145 family.

The sequence is that of UPF0145 protein Dred_2155 from Desulforamulus reducens (strain ATCC BAA-1160 / DSM 100696 / MI-1) (Desulfotomaculum reducens).